Consider the following 162-residue polypeptide: MKGKVWKFPDDVDTDIIIPGRYLVMRDPEKLREHVMEGLDPEFPSKVKPGDFIVAGKNFGCGSSREHAPLALKGAGIAAVIAESFARIFYRNAINVGIPLLEAPGITEKLNEGDEIEVDLDRGVIIRGDDEFPFKKLPDFMVEILEKGGLIPYLKKKGDFKG.

This sequence belongs to the LeuD family. LeuD type 2 subfamily. In terms of assembly, heterodimer of LeuC and LeuD.

The enzyme catalyses (2R,3S)-3-isopropylmalate = (2S)-2-isopropylmalate. It participates in amino-acid biosynthesis; L-leucine biosynthesis; L-leucine from 3-methyl-2-oxobutanoate: step 2/4. Functionally, catalyzes the isomerization between 2-isopropylmalate and 3-isopropylmalate, via the formation of 2-isopropylmaleate. The sequence is that of 3-isopropylmalate dehydratase small subunit (leuD) from Methanothermobacter thermautotrophicus (strain ATCC 29096 / DSM 1053 / JCM 10044 / NBRC 100330 / Delta H) (Methanobacterium thermoautotrophicum).